Consider the following 65-residue polypeptide: Small ribosomal subunit protein bS21 (65 aa).

This sequence belongs to the bacterial ribosomal protein bS21 family.

The sequence is that of Small ribosomal subunit protein bS21 from Aster yellows phytoplasma.